Here is a 314-residue protein sequence, read N- to C-terminus: 2-methoxy-6-polyprenyl-1,4-benzoquinol methylase, mitochondrial (314 aa).

The N-terminal 19 residues, 1-19 (MLQSLNRSVRYLSTSIGSR), are a transit peptide targeting the mitochondrion. S-adenosyl-L-methionine is bound by residues Thr109, Asp154, 186–187 (NS), and Ser203.

This sequence belongs to the class I-like SAM-binding methyltransferase superfamily. MenG/UbiE family. As to quaternary structure, component of a multi-subunit COQ enzyme complex.

It localises to the mitochondrion inner membrane. The catalysed reaction is a 2-methoxy-6-(all-trans-polyprenyl)benzene-1,4-diol + S-adenosyl-L-methionine = a 5-methoxy-2-methyl-3-(all-trans-polyprenyl)benzene-1,4-diol + S-adenosyl-L-homocysteine + H(+). Its pathway is cofactor biosynthesis; ubiquinone biosynthesis. In terms of biological role, methyltransferase required for the conversion of 2-polyprenyl-6-methoxy-1,4-benzoquinol (DDMQH2) to 2-polyprenyl-3-methyl-6-methoxy-1,4-benzoquinol (DMQH2). The polypeptide is 2-methoxy-6-polyprenyl-1,4-benzoquinol methylase, mitochondrial (Dictyostelium discoideum (Social amoeba)).